Here is a 349-residue protein sequence, read N- to C-terminus: Phosphate acyltransferase (349 aa).

This sequence belongs to the PlsX family. Homodimer. Probably interacts with PlsY.

It localises to the cytoplasm. It carries out the reaction a fatty acyl-[ACP] + phosphate = an acyl phosphate + holo-[ACP]. The protein operates within lipid metabolism; phospholipid metabolism. In terms of biological role, catalyzes the reversible formation of acyl-phosphate (acyl-PO(4)) from acyl-[acyl-carrier-protein] (acyl-ACP). This enzyme utilizes acyl-ACP as fatty acyl donor, but not acyl-CoA. This Akkermansia muciniphila (strain ATCC BAA-835 / DSM 22959 / JCM 33894 / BCRC 81048 / CCUG 64013 / CIP 107961 / Muc) protein is Phosphate acyltransferase.